A 651-amino-acid polypeptide reads, in one-letter code: Probable potassium transport system protein Kup (651 aa).

Transmembrane regions (helical) follow at residues 30-50, 71-91, 124-144, 158-178, 190-210, 233-253, 268-288, 310-330, 358-378, 387-407, 413-433, and 437-457; these read LALA…LYSL, IISM…VIFV, LLLG…TPAI, PDAE…LFIV, FGPV…PWII, AMAF…EALY, WFGL…AMIL, LVTI…SGAF, IYIP…ILIF, AYGL…LVLA, WPMW…LSIF, and LLKI…VVII.

It belongs to the HAK/KUP transporter (TC 2.A.72) family.

The protein localises to the cell membrane. The catalysed reaction is K(+)(in) + H(+)(in) = K(+)(out) + H(+)(out). Its function is as follows. Transport of potassium into the cell. Likely operates as a K(+):H(+) symporter. This is Probable potassium transport system protein Kup from Cutibacterium acnes (strain DSM 16379 / KPA171202) (Propionibacterium acnes).